The following is a 329-amino-acid chain: UDP-N-acetylenolpyruvoylglucosamine reductase (329 aa).

Residues 28 to 192 (RVGGPADLLC…ARVEVRLHAG (165 aa)) form the FAD-binding PCMH-type domain. The active site involves Arg172. A disordered region spans residues 202 to 227 (REDRERRRATQPLDRPTFGSTFTNPP). Ser221 acts as the Proton donor in catalysis. Glu291 is an active-site residue. The disordered stretch occupies residues 307–329 (DGHAAAGGGPGAASGGVRPPEAT). The segment covering 311-320 (AAGGGPGAAS) has biased composition (gly residues).

It belongs to the MurB family. FAD is required as a cofactor.

It is found in the cytoplasm. The catalysed reaction is UDP-N-acetyl-alpha-D-muramate + NADP(+) = UDP-N-acetyl-3-O-(1-carboxyvinyl)-alpha-D-glucosamine + NADPH + H(+). Its pathway is cell wall biogenesis; peptidoglycan biosynthesis. Functionally, cell wall formation. This is UDP-N-acetylenolpyruvoylglucosamine reductase from Anaeromyxobacter sp. (strain K).